The chain runs to 160 residues: Phosphatidylinositol N-acetylglucosaminyltransferase subunit gpi15 (160 aa).

The next 2 helical transmembrane spans lie at glycine 22 to isoleucine 42 and isoleucine 48 to valine 68.

This sequence belongs to the PIGH family.

The protein localises to the endoplasmic reticulum membrane. The catalysed reaction is a 1,2-diacyl-sn-glycero-3-phospho-(1D-myo-inositol) + UDP-N-acetyl-alpha-D-glucosamine = a 6-(N-acetyl-alpha-D-glucosaminyl)-1-(1,2-diacyl-sn-glycero-3-phospho)-1D-myo-inositol + UDP + H(+). The protein operates within glycolipid biosynthesis; glycosylphosphatidylinositol-anchor biosynthesis. Its function is as follows. Part of the complex catalyzing the transfer of N-acetylglucosamine from UDP-N-acetylglucosamine to phosphatidylinositol, the first step of GPI biosynthesis. In Schizosaccharomyces pombe (strain 972 / ATCC 24843) (Fission yeast), this protein is Phosphatidylinositol N-acetylglucosaminyltransferase subunit gpi15 (gpi15).